Consider the following 82-residue polypeptide: Diphthamide biosynthesis protein 3 (82 aa).

The DPH-type MB domain maps to 4-60 (FHDEVEIEDFQYDEDSETYFYPCPCGDNFAITKEDLENGEDVATCPSCSLIIKVIYD). Fe cation is bound by residues Cys26, Cys28, Cys48, and Cys51.

It belongs to the DPH3 family. As to quaternary structure, component of the 2-(3-amino-3-carboxypropyl)histidine synthase complex composed of DPH1, DPH2, DPH3 and a NADH-dependent reductase. Interacts with SERGEF. Fe(2+) serves as cofactor. In terms of tissue distribution, widely expressed with highest levels in heart, liver, kidney and testis.

It localises to the cytoplasm. The protein resides in the nucleus. It catalyses the reaction [3Fe-4S](1+)-[protein] + Fe(2+)-[Dph3] = [3Fe-4S](0)-[protein] + Fe(3+)-[Dph3]. The enzyme catalyses 2 [3Fe-4S](0)-[protein] + 2 Fe(2+)-[Dph3] + NADH = 2 [4Fe-4S](1+)-[protein] + 2 [Dph3] + NAD(+) + H(+). The protein operates within protein modification; peptidyl-diphthamide biosynthesis. Functionally, required for the first step of diphthamide biosynthesis, a post-translational modification of histidine which occurs in elongation factor 2. DPH1 and DPH2 transfer a 3-amino-3-carboxypropyl (ACP) group from S-adenosyl-L-methionine (SAM) to a histidine residue, the reaction is assisted by a reduction system comprising DPH3 and a NADH-dependent reductase. Acts as an electron donor to reduce the Fe-S cluster in DPH1-DPH2 keeping the [4Fe-4S] clusters in the active and reduced state. Restores iron to DPH1-DPH2 iron-sulfur clusters which have degraded from [4Fe-4S] to [3Fe-4S] by donating an iron atom to reform [4Fe-4S] clusters, in a manner dependent on the presence of elongation factor 2 and SAM. Associates with the elongator complex and is required for tRNA Wobble base modifications mediated by the elongator complex. The elongator complex is required for multiple tRNA modifications, including mcm5U (5-methoxycarbonylmethyl uridine), mcm5s 2U (5-methoxycarbonylmethyl-2-thiouridine), and ncm5U (5-carbamoylmethyl uridine). This chain is Diphthamide biosynthesis protein 3, found in Mus musculus (Mouse).